The chain runs to 118 residues: Nucleoid-associated protein CTN_1899 (118 aa).

The protein belongs to the YbaB/EbfC family. In terms of assembly, homodimer.

The protein localises to the cytoplasm. It is found in the nucleoid. Binds to DNA and alters its conformation. May be involved in regulation of gene expression, nucleoid organization and DNA protection. The sequence is that of Nucleoid-associated protein CTN_1899 from Thermotoga neapolitana (strain ATCC 49049 / DSM 4359 / NBRC 107923 / NS-E).